The chain runs to 37 residues: Large ribosomal subunit protein bL36c (37 aa).

Belongs to the bacterial ribosomal protein bL36 family.

It is found in the plastid. The protein resides in the chloroplast. The chain is Large ribosomal subunit protein bL36c from Tupiella akineta (Green alga).